Reading from the N-terminus, the 345-residue chain is 3-isopropylmalate dehydrogenase (345 aa).

Residues R94, R104, R132, and D216 each coordinate substrate. D216, D240, and D244 together coordinate Mg(2+). 274-286 (GSAPDIAGQGIAN) is an NAD(+) binding site.

The protein belongs to the isocitrate and isopropylmalate dehydrogenases family. LeuB type 1 subfamily. Homodimer. Mg(2+) is required as a cofactor. Mn(2+) serves as cofactor.

The protein localises to the cytoplasm. It catalyses the reaction (2R,3S)-3-isopropylmalate + NAD(+) = 4-methyl-2-oxopentanoate + CO2 + NADH. It functions in the pathway amino-acid biosynthesis; L-leucine biosynthesis; L-leucine from 3-methyl-2-oxobutanoate: step 3/4. Catalyzes the oxidation of 3-carboxy-2-hydroxy-4-methylpentanoate (3-isopropylmalate) to 3-carboxy-4-methyl-2-oxopentanoate. The product decarboxylates to 4-methyl-2 oxopentanoate. This is 3-isopropylmalate dehydrogenase from Streptococcus pneumoniae (strain ATCC BAA-255 / R6).